Consider the following 66-residue polypeptide: Conotoxin Lt3.5 (66 aa).

The first 20 residues, 1-20 (MMSKLGALLTICLLLFPLTA), serve as a signal peptide directing secretion. Positions 21 to 53 (VPLDGDQPLDRHAERMHDGISPKRHPWFDPVKR) are excised as a propeptide. Intrachain disulfides connect Cys54–Cys66, Cys55–Cys62, and Cys59–Cys65. Pro64 is modified (4-hydroxyproline).

This sequence belongs to the conotoxin M superfamily. In terms of tissue distribution, expressed by the venom duct.

Its subcellular location is the secreted. This Conus litteratus (Lettered cone) protein is Conotoxin Lt3.5.